The chain runs to 185 residues: HTH-type transcriptional repressor OpcR (185 aa).

A DNA-binding region (H-T-H motif) is located at residues 49 to 73; it reads LSELSEATGMSKTRMSQVVREMIDA.

It belongs to the GbsR family.

Is not choline-responsive. Functionally, negatively regulates the transcription of the opuC operon. In the absence of GbsR, is also a negative regulator of the opuB operon. Binds to an inverted repeat in the promoter region of the operons. The protein is HTH-type transcriptional repressor OpcR (opcR) of Bacillus subtilis (strain 168).